Reading from the N-terminus, the 239-residue chain is Glandular kallikrein, prostatic (239 aa).

The 236-residue stretch at 1-236 (VIGGQECARD…YREWIERTMA (236 aa)) folds into the Peptidase S1 domain. 5 disulfides stabilise this stretch: Cys-7/Cys-151, Cys-26/Cys-42, Cys-128/Cys-197, Cys-162/Cys-176, and Cys-187/Cys-212. Residue His-41 is the Charge relay system of the active site. N-linked (GlcNAc...) asparagine glycosylation is present at Asn-78. The Charge relay system role is filled by Asp-96. Residue Asn-169 is glycosylated (N-linked (GlcNAc...) asparagine). The Charge relay system role is filled by Ser-191.

This sequence belongs to the peptidase S1 family. Kallikrein subfamily.

It carries out the reaction Preferential cleavage of Arg-|-Xaa bonds in small molecule substrates. Highly selective action to release kallidin (lysyl-bradykinin) from kininogen involves hydrolysis of Met-|-Xaa or Leu-|-Xaa.. In terms of biological role, glandular kallikreins cleave Met-Lys and Arg-Ser bonds in kininogen to release Lys-bradykinin. In Cavia porcellus (Guinea pig), this protein is Glandular kallikrein, prostatic.